The sequence spans 164 residues: Two-component response regulator ARR16 (164 aa).

Residues 30–160 (HVLAVDDNLI…DVEKLKCHLM (131 aa)) form the Response regulatory domain. Aspartate 93 bears the 4-aspartylphosphate mark.

This sequence belongs to the ARR family. Type-A subfamily. Post-translationally, two-component system major event consists of a His-to-Asp phosphorelay between a sensor histidine kinase (HK) and a response regulator (RR). In plants, the His-to-Asp phosphorelay involves an additional intermediate named Histidine-containing phosphotransfer protein (HPt). This multistep phosphorelay consists of a His-Asp-His-Asp sequential transfer of a phosphate group between first a His and an Asp of the HK protein, followed by the transfer to a conserved His of the HPt protein and finally the transfer to an Asp in the receiver domain of the RR protein.

The protein localises to the nucleus. Functionally, functions as a response regulator involved in His-to-Asp phosphorelay signal transduction system. Phosphorylation of the Asp residue in the receiver domain activates the ability of the protein to promote the transcription of target genes. Type-A response regulators seem to act as negative regulators of the cytokinin signaling. This Arabidopsis thaliana (Mouse-ear cress) protein is Two-component response regulator ARR16 (ARR16).